The chain runs to 345 residues: Biotin synthase (345 aa).

One can recognise a Radical SAM core domain in the interval 38–256; it reads RQVQVSTLLS…IAVARIMMPA (219 aa). [4Fe-4S] cluster is bound by residues C53, C57, and C60. [2Fe-2S] cluster is bound by residues C97, C128, C188, and R260.

This sequence belongs to the radical SAM superfamily. Biotin synthase family. Homodimer. [4Fe-4S] cluster serves as cofactor. [2Fe-2S] cluster is required as a cofactor.

The catalysed reaction is (4R,5S)-dethiobiotin + (sulfur carrier)-SH + 2 reduced [2Fe-2S]-[ferredoxin] + 2 S-adenosyl-L-methionine = (sulfur carrier)-H + biotin + 2 5'-deoxyadenosine + 2 L-methionine + 2 oxidized [2Fe-2S]-[ferredoxin]. It functions in the pathway cofactor biosynthesis; biotin biosynthesis; biotin from 7,8-diaminononanoate: step 2/2. Functionally, catalyzes the conversion of dethiobiotin (DTB) to biotin by the insertion of a sulfur atom into dethiobiotin via a radical-based mechanism. This chain is Biotin synthase, found in Pectobacterium atrosepticum (strain SCRI 1043 / ATCC BAA-672) (Erwinia carotovora subsp. atroseptica).